Here is a 471-residue protein sequence, read N- to C-terminus: Cell division protein FtsP (471 aa).

The segment at residues 1 to 27 (MSLSRRSFLQASGVALAAGALPLKAEA) is a signal peptide (tat-type signal). In terms of domain architecture, Plastocyanin-like spans 229–288 (VRLRLLNASNARRYELSMTDNRAFHVVASDLGFLPAPMTVKRLSLGPGERREVLVDMSQG).

The protein belongs to the FtsP family. Predicted to be exported by the Tat system. The position of the signal peptide cleavage has not been experimentally proven.

Its subcellular location is the periplasm. In terms of biological role, cell division protein that is required for growth during stress conditions. May be involved in protecting or stabilizing the divisomal assembly under conditions of stress. In Rahnella sp. (strain Y9602), this protein is Cell division protein FtsP.